A 175-amino-acid polypeptide reads, in one-letter code: Capsid protein (175 aa).

The interval 1–35 (MFRQEMARYPKKSIKKRRVGRRKYGSKAATSHDYS) is disordered. Residues 9 to 25 (YPKKSIKKRRVGRRKYG) show a composition bias toward basic residues.

The protein belongs to the nanoviridae capsid protein family.

The protein localises to the virion. In Musa (BBTV), this protein is Capsid protein (DNA-S).